The following is a 402-amino-acid chain: Dual-specificity RNA methyltransferase RlmN (402 aa).

Glutamate 94 acts as the Proton acceptor in catalysis. Positions 100-351 (EDDRGTLCIS…ATVRKTRGDD (252 aa)) constitute a Radical SAM core domain. A disulfide bond links cysteine 107 and cysteine 356. Residues cysteine 114, cysteine 118, and cysteine 121 each coordinate [4Fe-4S] cluster. Residues 182–183 (GE), serine 214, 236–238 (SLH), and asparagine 313 contribute to the S-adenosyl-L-methionine site. Residue cysteine 356 is the S-methylcysteine intermediate of the active site.

The protein belongs to the radical SAM superfamily. RlmN family. It depends on [4Fe-4S] cluster as a cofactor.

It localises to the cytoplasm. The enzyme catalyses adenosine(2503) in 23S rRNA + 2 reduced [2Fe-2S]-[ferredoxin] + 2 S-adenosyl-L-methionine = 2-methyladenosine(2503) in 23S rRNA + 5'-deoxyadenosine + L-methionine + 2 oxidized [2Fe-2S]-[ferredoxin] + S-adenosyl-L-homocysteine. It catalyses the reaction adenosine(37) in tRNA + 2 reduced [2Fe-2S]-[ferredoxin] + 2 S-adenosyl-L-methionine = 2-methyladenosine(37) in tRNA + 5'-deoxyadenosine + L-methionine + 2 oxidized [2Fe-2S]-[ferredoxin] + S-adenosyl-L-homocysteine. Specifically methylates position 2 of adenine 2503 in 23S rRNA and position 2 of adenine 37 in tRNAs. m2A2503 modification seems to play a crucial role in the proofreading step occurring at the peptidyl transferase center and thus would serve to optimize ribosomal fidelity. The polypeptide is Dual-specificity RNA methyltransferase RlmN (Polynucleobacter asymbioticus (strain DSM 18221 / CIP 109841 / QLW-P1DMWA-1) (Polynucleobacter necessarius subsp. asymbioticus)).